A 415-amino-acid chain; its full sequence is Glucose-6-phosphate isomerase (415 aa).

The active-site Proton donor is the Glu267. Catalysis depends on residues His293 and Lys406.

It belongs to the GPI family.

It is found in the cytoplasm. The enzyme catalyses alpha-D-glucose 6-phosphate = beta-D-fructose 6-phosphate. It functions in the pathway carbohydrate biosynthesis; gluconeogenesis. Its pathway is carbohydrate degradation; glycolysis; D-glyceraldehyde 3-phosphate and glycerone phosphate from D-glucose: step 2/4. Its function is as follows. Catalyzes the reversible isomerization of glucose-6-phosphate to fructose-6-phosphate. In Thermus thermophilus (strain ATCC 27634 / DSM 579 / HB8), this protein is Glucose-6-phosphate isomerase.